Reading from the N-terminus, the 97-residue chain is Large ribosomal subunit protein bL28 (97 aa).

This sequence belongs to the bacterial ribosomal protein bL28 family.

This is Large ribosomal subunit protein bL28 from Rickettsia peacockii (strain Rustic).